Here is a 115-residue protein sequence, read N- to C-terminus: Large ribosomal subunit protein bL20 (115 aa).

Belongs to the bacterial ribosomal protein bL20 family.

Its function is as follows. Binds directly to 23S ribosomal RNA and is necessary for the in vitro assembly process of the 50S ribosomal subunit. It is not involved in the protein synthesizing functions of that subunit. The polypeptide is Large ribosomal subunit protein bL20 (Cytophaga hutchinsonii (strain ATCC 33406 / DSM 1761 / CIP 103989 / NBRC 15051 / NCIMB 9469 / D465)).